A 124-amino-acid polypeptide reads, in one-letter code: Large ribosomal subunit protein bL20 (124 aa).

Belongs to the bacterial ribosomal protein bL20 family.

In terms of biological role, binds directly to 23S ribosomal RNA and is necessary for the in vitro assembly process of the 50S ribosomal subunit. It is not involved in the protein synthesizing functions of that subunit. The protein is Large ribosomal subunit protein bL20 of Ehrlichia chaffeensis (strain ATCC CRL-10679 / Arkansas).